The following is a 278-amino-acid chain: Thioredoxin-related transmembrane protein 1 (278 aa).

The signal sequence occupies residues 1–26 (MAPSGSLRIPVAVLLLLLWGAPWAHG). One can recognise a Thioredoxin domain in the interval 27–132 (KRSDVRIITD…FINFISDKEW (106 aa)). Over 27–180 (KRSDVRIITD…EDLGLPIWGS (154 aa)) the chain is Extracellular. Residues cysteine 56 and cysteine 59 each act as nucleophile in the active site. The cysteines at positions 56 and 59 are disulfide-linked. The helical transmembrane segment at 181–203 (YTVFALATLLSGLLLGLFMIFVA) threads the bilayer. Residues 204 to 278 (DCLCPSKRRR…VGPSLATDKS (75 aa)) lie on the Cytoplasmic side of the membrane. Residues cysteine 205 and cysteine 207 are each lipidated (S-palmitoyl cysteine). A disordered region spans residues 213 to 278 (RPQPYPSRKL…VGPSLATDKS (66 aa)). Residues serine 226, serine 245, serine 268, serine 272, and serine 278 each carry the phosphoserine modification. The segment covering 235 to 250 (EEQEADVEDVSEEESE) has biased composition (acidic residues).

Interacts with ATP2A2. In terms of processing, palmitoylated; palmitoylation is required for localization to mitochondria-associated endoplasmic reticulum membrane (MAM).

It localises to the endoplasmic reticulum membrane. The protein resides in the mitochondrion membrane. The protein localises to the secreted. It carries out the reaction Catalyzes the rearrangement of -S-S- bonds in proteins.. Thiredoxin domain-containing protein that participates in various redox reactions through the reversible oxidation of its active center dithiol to a disulfide and catalyze dithiol-disulfide exchange reactions. Acts as a key inhibitor of the alternative triglyceride biosynthesis pathway by inhibiting the activity of TMEM68/DIESL at the endoplasmic reticulum, thereby restricting accumulation of triacylglycerol. The alternative triglyceride biosynthesis pathway mediates formation of triacylglycerol from diacylglycerol and membrane phospholipids. Acts as a protein disulfide isomerase by catalyzing formation or reduction of disulfide bonds. Specifically mediates formation of disulfide bonds of transmembrane proteins at the endoplasmic reticulum membrane. Involved in endoplasmic reticulum-associated degradation (ERAD) via its protein disulfide isomerase activity by acting on folding-defective polypeptides at the endoplasmic reticulum membrane. Acts as a negative regulator of platelet aggregation following secretion in the extracellular space. Acts as a regulator of endoplasmic reticulum-mitochondria contact sites via its ability to regulate redox signals. Regulates endoplasmic reticulum-mitochondria Ca(2+) flux. This Bos taurus (Bovine) protein is Thioredoxin-related transmembrane protein 1 (TMX1).